A 117-amino-acid polypeptide reads, in one-letter code: Large ribosomal subunit protein bL19 (117 aa).

The protein belongs to the bacterial ribosomal protein bL19 family.

This protein is located at the 30S-50S ribosomal subunit interface and may play a role in the structure and function of the aminoacyl-tRNA binding site. The sequence is that of Large ribosomal subunit protein bL19 from Vibrio parahaemolyticus serotype O3:K6 (strain RIMD 2210633).